The primary structure comprises 512 residues: MSFTTLYSAIQGDASARALVAPSLNAELSFSELRIAIMDLQRQIASLGIKVGDPVNIAIPNGLEFVVAFYAVSWQRAICGPLNSNYKQSEFEFYIDDLKSKLVIVPEGSVAANTPAVRAAKKLSVAVAELAWCPKSRLVRIVHFEGAKINAPQPLGLPQPDDVMLVLHTSGTTGRPKVVPLTHKNLCRSIHNITTSYRLDPRDTSYVVMPLFHVHGLLCGLLSTLASGGCAVVPPKFSAHSFWKEFIQYGATWYTAVPTIHQILLRTPPPKPLPRIRFIRSCSSPLAPPVLSKLEATFRAPVLEAYAMTEASHQMTTNPLPPLVHKPHSVGKPFGVELKILDQKGNEMPQGKEGEICVRGINVTKGYLNNPAANKSSFTKDRFFRTGDEGKLDKDGYVFITGRIKELVNRGGEKISPAEIDAVLMQHPDVSEAVCFAVPDEKYGQDIQAAINPVAGKTVTPKQLHDYLEQKVAAFKIPKKFYFTDRIPKTATGKVQRRLVCDAFFNHSKAKL.

168–179 (HTSGTTGRPKVV) provides a ligand contact to ATP. 2 positions are modified to phosphoserine: Ser-283 and Ser-284. The FACS signature appears at 381–429 (DRFFRTGDEGKLDKDGYVFITGRIKELVNRGGEKISPAEIDAVLMQHPD). The Microbody targeting signal motif lies at 510–512 (AKL).

This sequence belongs to the ATP-dependent AMP-binding enzyme family.

It localises to the peroxisome matrix. Its subcellular location is the peroxisome membrane. The catalysed reaction is oxalate + ATP + CoA = oxalyl-CoA + AMP + diphosphate. Catalyzes the first step in a degradation pathway of oxalate to CO(2) to protect the cell against the harmful effects of oxalate derived from endogenous processes or an environmental sources. The sequence is that of Oxalate--CoA ligase (pcs60) from Schizosaccharomyces pombe (strain 972 / ATCC 24843) (Fission yeast).